We begin with the raw amino-acid sequence, 452 residues long: Keratin, type II cytoskeletal 80 (452 aa).

Residues 1–82 (MAYRSCVVGF…DPAVQQQKNQ (82 aa)) form a head region. A Phosphoserine modification is found at S45. Residues 82–118 (QEKEEMKALNDKFASLIGKVQALEQRNQLLETRWSFL) are coil 1A. The IF rod domain maps to 83-394 (EKEEMKALND…KLMEGEESRM (312 aa)). The segment at 119–135 (QGQGSATFDLSHHYETF) is linker 1. The segment at 136–227 (QGRLQEELRK…TVYEQELKDL (92 aa)) is coil 1B. The tract at residues 228–251 (TAQVKDVSVTVGLDSRCHIDLSGI) is linker 12. The segment at 252–390 (VEEVKAQYDA…ATYHKLMEGE (139 aa)) is coil 2. A tail region spans residues 391 to 452 (ESRMDLPSAT…YLSQESEASE (62 aa)). A disordered region spans residues 412–452 (TASKSGLTKTSSRKKKNRRGPVIKITEMSEKYLSQESEASE). The segment covering 422 to 432 (SSRKKKNRRGP) has biased composition (basic residues). Residues 443–452 (YLSQESEASE) are compositionally biased toward polar residues.

Belongs to the intermediate filament family. Heterotetramer of two type I and two type II keratins.

This Mus musculus (Mouse) protein is Keratin, type II cytoskeletal 80 (Krt80).